Reading from the N-terminus, the 179-residue chain is Large ribosomal subunit protein uL5 (179 aa).

The protein belongs to the universal ribosomal protein uL5 family. As to quaternary structure, part of the 50S ribosomal subunit; part of the 5S rRNA/L5/L18/L25 subcomplex. Contacts the 5S rRNA and the P site tRNA. Forms a bridge to the 30S subunit in the 70S ribosome.

Functionally, this is one of the proteins that bind and probably mediate the attachment of the 5S RNA into the large ribosomal subunit, where it forms part of the central protuberance. In the 70S ribosome it contacts protein S13 of the 30S subunit (bridge B1b), connecting the 2 subunits; this bridge is implicated in subunit movement. Contacts the P site tRNA; the 5S rRNA and some of its associated proteins might help stabilize positioning of ribosome-bound tRNAs. The chain is Large ribosomal subunit protein uL5 from Oceanobacillus iheyensis (strain DSM 14371 / CIP 107618 / JCM 11309 / KCTC 3954 / HTE831).